The sequence spans 377 residues: N-acetyldiaminopimelate deacetylase (377 aa).

Asp-70 is a catalytic residue. The active-site Proton acceptor is Glu-129.

It belongs to the peptidase M20A family. N-acetyldiaminopimelate deacetylase subfamily.

The enzyme catalyses N-acetyl-(2S,6S)-2,6-diaminopimelate + H2O = (2S,6S)-2,6-diaminopimelate + acetate. It participates in amino-acid biosynthesis; L-lysine biosynthesis via DAP pathway; LL-2,6-diaminopimelate from (S)-tetrahydrodipicolinate (acetylase route): step 3/3. In terms of biological role, catalyzes the conversion of N-acetyl-diaminopimelate to diaminopimelate and acetate. The chain is N-acetyldiaminopimelate deacetylase from Geobacillus thermodenitrificans (strain NG80-2).